Consider the following 110-residue polypeptide: Protein YcgL (110 aa).

The YcgL domain occupies 14-98 (MFCVIYRSSK…PPEDLLKQHL (85 aa)). The segment at 87 to 110 (PPPPEDLLKQHLSSVGQNTSSADR) is disordered. The span at 97 to 110 (HLSSVGQNTSSADR) shows a compositional bias: polar residues.

The chain is Protein YcgL from Salmonella newport (strain SL254).